Consider the following 169-residue polypeptide: MQSNIENVSRDYAKILQSADLEKEINPLCTNIEDMLARLDEFETLLASVRAESNGMMANNVCSILGFTDSFEQLKARIDGLEQCVGVVSANLSEVERSVDIAEEELHVTDYSLKGLLLKPLKAKLSASDTSTLSSLPRSNLVEEEYQPVEIYKSDDYFGKSEEENYVAK.

This sequence belongs to the BLOC1S4 family. As to quaternary structure, component of the biogenesis of lysosome-related organelles complex-1 (BLOC-1) composed of Blos1, Blos2, Blos3, Blos4, Dysb, Muted, Pldn and Snapin. Interacts with Pldn.

Component of the biogenesis of lysosome-related organelles complex-1 (BLOC-1) involved in pigment granule biogenesis. The sequence is that of Biogenesis of lysosome-related organelles complex 1 subunit 4 from Drosophila melanogaster (Fruit fly).